Consider the following 215-residue polypeptide: Beta-crystallin A3-1 (215 aa).

The N-terminal arm stretch occupies residues 1-30 (MEIPVDQTEREDITSEKMAQINPLPVHLGP). Beta/gamma crystallin 'Greek key' domains are found at residues 31–70 (WKIT…KVEC) and 71–117 (GAWI…RPIC). A connecting peptide region spans residues 118–123 (SANHIE). Beta/gamma crystallin 'Greek key' domains follow at residues 124–165 (SKLV…KVQC) and 166–214 (GAWV…RRIQ).

Belongs to the beta/gamma-crystallin family. As to quaternary structure, homo/heterodimer, or complexes of higher-order. The structure of beta-crystallin oligomers seems to be stabilized through interactions between the N-terminal arms. Post-translationally, the N-terminus is blocked.

Crystallins are the dominant structural components of the vertebrate eye lens. The polypeptide is Beta-crystallin A3-1 (Aquarana catesbeiana (American bullfrog)).